We begin with the raw amino-acid sequence, 510 residues long: Serine/threonine protein phosphatase 2A 57 kDa regulatory subunit B' kappa isoform (510 aa).

The interval 1 to 51 (MWKGFLSKLPRKTSASGRGADLDSGQCSNGAGNGNPIQRTSSCGSIPSGRS) is disordered. Residues 25–51 (GQCSNGAGNGNPIQRTSSCGSIPSGRS) show a composition bias toward polar residues. Residues T476 and T493 each carry the phosphothreonine modification. A Phosphoserine modification is found at S502. T508 is modified (phosphothreonine).

Belongs to the phosphatase 2A regulatory subunit B56 family. PP2A consists of a common heteromeric enzyme, composed of a catalytic subunit (subunits C), a constant regulatory subunit (subunit A), and a variety of regulatory subunits such as subunits B (the R2/B/PR55/B55, R3/B''/PR72/PR130/PR59 and R5/B'/B56 families). Interacts with SIT1. In terms of processing, phosphorylated at Thr-476, Thr-493, Ser-502 and Thr-508 by SIT1. Expressed in root stele and epidermal cells.

Its subcellular location is the cytoplasm. It is found in the cytosol. The protein localises to the cell membrane. Its function is as follows. B regulatory subunit of phosphatase 2A (PP2A) involved in salt stress response. Under salt stress conditions, required for the catalytic activity of PP2A and the dephosphorylation of SIT1, a negative regulator of salt tolerance. Dephosphorylation of SIT1 turns off salt-induced SIT1 activity directly, which has a positive effect on salt tolerance. The sequence is that of Serine/threonine protein phosphatase 2A 57 kDa regulatory subunit B' kappa isoform from Oryza sativa subsp. japonica (Rice).